A 65-amino-acid chain; its full sequence is Large ribosomal subunit protein uL29 (65 aa).

It belongs to the universal ribosomal protein uL29 family.

The chain is Large ribosomal subunit protein uL29 from Lactobacillus delbrueckii subsp. bulgaricus (strain ATCC 11842 / DSM 20081 / BCRC 10696 / JCM 1002 / NBRC 13953 / NCIMB 11778 / NCTC 12712 / WDCM 00102 / Lb 14).